A 406-amino-acid chain; its full sequence is MTETSYRTGPDEKGLFGRFGGQYVAETLMPLILDLAEEYERAKVDPAFLEELAYFQRDYVGRPSPLYFAERLTEHCGGAKIYLKREELNHTGAHKINNCIGQILLARRMGKQRIIAETGAGMHGVATATVAARFGLQCVIYMGTTDIDRQQANVFRMKLLGAEVIPVTAGTGTLKDAMNEALRDWVTNVETTFYLIGTVAGPHPYPAMVRDFQAVIGKETREQLIEKEGRLPDSLVACIGGGSNAMGLFHPFLDEPGVKIVGVEAAGHGIETGKHAASLNGGVPGVLHGNRTFLLQDADGQIIDAHSISAGLDYPGIGPEHAWLHDIGRVEYSSITDHEALQAFHTCCRLEGIIPALESSHALAEVFKRAPRLPKDHLMVVNLSGRGDKDMQTVMHHMQEKLEKHA.

Residue lysine 95 is modified to N6-(pyridoxal phosphate)lysine.

The protein belongs to the TrpB family. Tetramer of two alpha and two beta chains. It depends on pyridoxal 5'-phosphate as a cofactor.

It carries out the reaction (1S,2R)-1-C-(indol-3-yl)glycerol 3-phosphate + L-serine = D-glyceraldehyde 3-phosphate + L-tryptophan + H2O. The protein operates within amino-acid biosynthesis; L-tryptophan biosynthesis; L-tryptophan from chorismate: step 5/5. Functionally, the beta subunit is responsible for the synthesis of L-tryptophan from indole and L-serine. This is Tryptophan synthase beta chain from Azotobacter vinelandii (strain DJ / ATCC BAA-1303).